The primary structure comprises 312 residues: Beta-ketoacyl-[acyl-carrier-protein] synthase III 1 (312 aa).

Active-site residues include Cys-113 and His-237. The segment at 238–242 (QANIR) is ACP-binding. Residue Asn-267 is part of the active site.

The protein belongs to the thiolase-like superfamily. FabH family. Homodimer.

The protein localises to the cytoplasm. The catalysed reaction is malonyl-[ACP] + acetyl-CoA + H(+) = 3-oxobutanoyl-[ACP] + CO2 + CoA. It functions in the pathway lipid metabolism; fatty acid biosynthesis. Catalyzes the condensation reaction of fatty acid synthesis by the addition to an acyl acceptor of two carbons from malonyl-ACP. Catalyzes the first condensation reaction which initiates fatty acid synthesis and may therefore play a role in governing the total rate of fatty acid production. Possesses both acetoacetyl-ACP synthase and acetyl transacylase activities. Its substrate specificity determines the biosynthesis of branched-chain and/or straight-chain of fatty acids. This Halalkalibacterium halodurans (strain ATCC BAA-125 / DSM 18197 / FERM 7344 / JCM 9153 / C-125) (Bacillus halodurans) protein is Beta-ketoacyl-[acyl-carrier-protein] synthase III 1.